We begin with the raw amino-acid sequence, 1162 residues long: MKRVREEVYVEPQMRGPTVSSRGETNGRPSTISGGGTTGGLTTVDALTYLKAVKDMFQDNKEKYETFLGVMKDFKAQRVDTNGVIARVKDLFKGYDDLLLGFNTFLPKGYKITLQPEDEKPKKPVDFQVAIEFVNRIKARFGGDDRAYKKFLDILNMYRKETKSINEVYQEVTLLFQDHEDLLGEFVHFLPDFRGSVSVNDPLFQRNTIPRDRNSTFPGMHPKHFEKKIKRSRHDEYTELSDQREDGDENLVAYSAESLANQGQWPGYPKVEDTEGIQIYESNGGHERDPDIGSQKNLLSTNHMAKAINELDLTDCAQCTPSYRRLPDDYPIQIPSYRNSLGEKVLNDHWVSVTSGSEDYSFKHMRKNQYEESLFRCEDDRFELDMLLESVSAAIKRVESLLEKINNNTISIETPICIREHLSELNLRCIERLYGDYGLDVMDFLKKNSHIALPVILTRLKQKQEEWARCRADFRKVWAEVYAKNHHKSLDHRSFYFKQQDSKNLSTKGLVAEIKDISERKHKEDLLRAIAVGTKPSFTPDVEFIYTDTKVHTDLYKLIKYYCEEICATEQSDKVMKLWVTFLEPMFGVPSRSETIETMKDVAKIEDNQEHHDASEAVKENTCDGSMASNLKPLTPPKMPNKENPMIQGSSFAQDLPVNTGESIQQDKLHDVAAITNEDSQPSKLVSTRNDLIMEGVENRSRVSDVSMGGHKVEREEGELSPTESCEQENFEVYKENGLEPVQKLPDNEISNTDREPKEGACGTEAVTRSNALPEDDDNKITQKLSEGDENASKFIVSASKFGGQVSSDEEHKGAESENEAGGMVNSNEGEDGSFFTFSERYLQPVKPLAKHVPGTLQASECDTRNDSRVFYGNDSLYVLFRLHQMLYERIQSAKIHSERKWKAPDSTSTDSYTRFMEALYNLLDGSSDNTKFEDECRAIIGAQSYVLFTLDKLVQKFVKHLHAVAADETDTKLLQLYAYENYRKPGRFFDIVYHENARALLHDQNIYRIEYSSAQTRLGIQLMNSWNDQPEVTAVTVEPGFANYLQNDFLSFVSDEEKPGLFLKRNKAKLSGPGEESLGMSRALEGLNIINEVECKIACSSFKVKYEPHTADLLYRRKQKKATLNPTGPENVKTSDSSELSRKKRISRFHMSLNRRLVALP.

Residues 1 to 37 (MKRVREEVYVEPQMRGPTVSSRGETNGRPSTISGGGT) form a disordered region. Over residues 18–30 (TVSSRGETNGRPS) the composition is skewed to polar residues. 2 consecutive PAH domains span residues 28–109 (RPST…LPKG) and 123–193 (KPVD…LPDF). Disordered regions lie at residues 702 to 727 (RVSD…ESCE), 743 to 779 (QKLP…DDDN), 803 to 830 (GGQV…SNEG), and 1121 to 1143 (KKAT…ELSR). Position 817 is a phosphoserine (serine 817). A compositionally biased stretch (polar residues) spans 1123–1139 (ATLNPTGPENVKTSDSS).

The protein resides in the nucleus. Functionally, acts as a transcriptional repressor. Plays roles in regulating gene expression and genome stability. This Arabidopsis thaliana (Mouse-ear cress) protein is Paired amphipathic helix protein Sin3-like 5 (SNL5).